The chain runs to 258 residues: uncharacterized protein (258 aa).

This is an uncharacterized protein from Acidianus filamentous virus 2 (isolate Italy/Pozzuoli) (AFV-2).